A 274-amino-acid polypeptide reads, in one-letter code: Shikimate dehydrogenase (NADP(+)) (274 aa).

Residues 14-16 (SLS) and T61 each bind shikimate. K65 acts as the Proton acceptor in catalysis. The shikimate site is built by N85 and D106. Residues 130–134 (GAGGA), 153–158 (NRTAER), and A217 contribute to the NADP(+) site. Y219 lines the shikimate pocket. An NADP(+)-binding site is contributed by G240.

It belongs to the shikimate dehydrogenase family. Homodimer.

It catalyses the reaction shikimate + NADP(+) = 3-dehydroshikimate + NADPH + H(+). The protein operates within metabolic intermediate biosynthesis; chorismate biosynthesis; chorismate from D-erythrose 4-phosphate and phosphoenolpyruvate: step 4/7. In terms of biological role, involved in the biosynthesis of the chorismate, which leads to the biosynthesis of aromatic amino acids. Catalyzes the reversible NADPH linked reduction of 3-dehydroshikimate (DHSA) to yield shikimate (SA). In Halorubrum lacusprofundi (strain ATCC 49239 / DSM 5036 / JCM 8891 / ACAM 34), this protein is Shikimate dehydrogenase (NADP(+)).